A 500-amino-acid chain; its full sequence is Bifunctional protein GlmU (500 aa).

The pyrophosphorylase stretch occupies residues 1–242; the sequence is MPVQTAVVVL…SAKVAGANDR (242 aa). UDP-N-acetyl-alpha-D-glucosamine is bound by residues 10–13, K24, Q81, and 86–87; these read LAAG and GT. D112 provides a ligand contact to Mg(2+). Residues G151, E167, N182, and N240 each contribute to the UDP-N-acetyl-alpha-D-glucosamine site. A Mg(2+)-binding site is contributed by N240. Residues 243 to 263 are linker; it reads VQLSRLAAELNRRTVENWMRA. The N-acetyltransferase stretch occupies residues 264-500; it reads GVTVVDPSTT…KQDLKDGIEQ (237 aa). UDP-N-acetyl-alpha-D-glucosamine is bound by residues R345 and K363. H375 functions as the Proton acceptor in the catalytic mechanism. Y378 and N389 together coordinate UDP-N-acetyl-alpha-D-glucosamine. Acetyl-CoA is bound by residues A392, 398 to 399, S417, and A435; that span reads NY. Residues 459–500 are disordered; the sequence is DGWVQRNRPGTPAAEAASAAGPHHSSDLHETEKQDLKDGIEQ. Positions 482–500 are enriched in basic and acidic residues; it reads HSSDLHETEKQDLKDGIEQ.

It in the N-terminal section; belongs to the N-acetylglucosamine-1-phosphate uridyltransferase family. The protein in the C-terminal section; belongs to the transferase hexapeptide repeat family. In terms of assembly, homotrimer. Requires Mg(2+) as cofactor.

The protein localises to the cytoplasm. It catalyses the reaction alpha-D-glucosamine 1-phosphate + acetyl-CoA = N-acetyl-alpha-D-glucosamine 1-phosphate + CoA + H(+). It carries out the reaction N-acetyl-alpha-D-glucosamine 1-phosphate + UTP + H(+) = UDP-N-acetyl-alpha-D-glucosamine + diphosphate. The protein operates within nucleotide-sugar biosynthesis; UDP-N-acetyl-alpha-D-glucosamine biosynthesis; N-acetyl-alpha-D-glucosamine 1-phosphate from alpha-D-glucosamine 6-phosphate (route II): step 2/2. It functions in the pathway nucleotide-sugar biosynthesis; UDP-N-acetyl-alpha-D-glucosamine biosynthesis; UDP-N-acetyl-alpha-D-glucosamine from N-acetyl-alpha-D-glucosamine 1-phosphate: step 1/1. Its pathway is bacterial outer membrane biogenesis; LPS lipid A biosynthesis. Functionally, catalyzes the last two sequential reactions in the de novo biosynthetic pathway for UDP-N-acetylglucosamine (UDP-GlcNAc). The C-terminal domain catalyzes the transfer of acetyl group from acetyl coenzyme A to glucosamine-1-phosphate (GlcN-1-P) to produce N-acetylglucosamine-1-phosphate (GlcNAc-1-P), which is converted into UDP-GlcNAc by the transfer of uridine 5-monophosphate (from uridine 5-triphosphate), a reaction catalyzed by the N-terminal domain. The sequence is that of Bifunctional protein GlmU from Rhodococcus opacus (strain B4).